Consider the following 377-residue polypeptide: Unsaturated 3S-rhamnoglycuronyl hydrolase (377 aa).

An N-terminal signal peptide occupies residues 1–25 (MKNQALKILTLCVLVGSAMSLKLYA). Residue Asp-161 is the Proton donor of the active site.

It belongs to the glycosyl hydrolase 105 family.

The protein localises to the periplasm. Unsaturated beta-glucuronyl hydrolase involved in ulvan degradation. Ulvan is the main polysaccharide component of the Ulvales (green seaweed) cell wall. It is composed of disaccharide building blocks comprising 3-sulfated rhamnose (Rha3S) linked to D-glucuronic acid (GlcA), L-iduronic acid (IduA), or D-xylose (Xyl). Unsaturated 3S-rhamnoglycuronyl hydrolase works together with ulvan lyases to fully degrade the ulvan polymer, catalyzing specifically the cleavage of the unsaturated 4-deoxy-L-threo-hex-4-enopyranosiduronic acid (deltaUA) of deltaUA-Rha3S disaccharides and deltaUA-Rha3S-Xyl-Rha3S tetrasaccharides, the end products of the ulvan lyase reaction. Also hydrolases deltaUA-Rha3S-IduA-Rha3S and deltaUA-Rha3S-GlcA-Rha3S tetrasaccharidestetrasaccharides. Prefers tetrasaccharides over disaccharides and prefers an uronic residue at subsite +2. This chain is Unsaturated 3S-rhamnoglycuronyl hydrolase, found in Formosa agariphila (strain DSM 15362 / KCTC 12365 / LMG 23005 / KMM 3901 / M-2Alg 35-1).